The primary structure comprises 191 residues: NF-kappa-B inhibitor-interacting Ras-like protein 2 (191 aa).

The interval methionine 1–glycine 191 is small GTPase-like. Residue glycine 11 to threonine 18 coordinates GTP. An Effector region motif is present at residues methionine 35 to tyrosine 43. GTP contacts are provided by residues aspartate 61–leucine 65 and asparagine 120–aspartate 123. Residues threonine 169–glycine 191 are disordered.

This sequence belongs to the small GTPase superfamily. Ras family. KappaB-Ras subfamily. As to quaternary structure, interacts with both NF-kappa-B inhibitor alpha (NFKBIA) and beta (NFKBIB) in vitro. However, it probably only interacts with NFKBIB in vivo. Interacts with GFOD1.

Its subcellular location is the cytoplasm. Its function is as follows. Atypical Ras-like protein that acts as a potent regulator of NF-kappa-B activity by preventing the degradation of NF-kappa-B inhibitor beta (NFKBIB) by most signals, explaining why NFKBIB is more resistant to degradation. May act by blocking phosphorylation of NFKBIB and nuclear localization of p65/RELA NF-kappa-B subunit. It is unclear whether it acts as a GTPase. Both GTP- and GDP-bound forms block phosphorylation of NFKBIB. This is NF-kappa-B inhibitor-interacting Ras-like protein 2 (Nkiras2) from Mus musculus (Mouse).